A 161-amino-acid chain; its full sequence is Nucleotide-binding protein Bd0338 (161 aa).

Belongs to the YajQ family.

Functionally, nucleotide-binding protein. This chain is Nucleotide-binding protein Bd0338, found in Bdellovibrio bacteriovorus (strain ATCC 15356 / DSM 50701 / NCIMB 9529 / HD100).